A 291-amino-acid polypeptide reads, in one-letter code: Probable ABC transporter permease protein PH1038 (291 aa).

The next 8 helical transmembrane spans lie at 7 to 27 (PFFF…YPVF), 75 to 95 (IVWI…FALL), 106 to 126 (IIKS…GLII), 133 to 153 (GAGV…AITW), 160 to 180 (ALFS…MLMY), 208 to 228 (FVIW…TLLW), 232 to 252 (IFDI…MVLA), and 267 to 287 (YAAV…LWLI). Positions 71–286 (LIHNIVWIAI…ALTFIPALWL (216 aa)) constitute an ABC transmembrane type-1 domain.

Belongs to the binding-protein-dependent transport system permease family. MalFG subfamily.

It is found in the cell membrane. Functionally, probably part of a binding-protein-dependent transport system PH1036/38/39. Probably responsible for the translocation of the substrate across the membrane. This is Probable ABC transporter permease protein PH1038 from Pyrococcus horikoshii (strain ATCC 700860 / DSM 12428 / JCM 9974 / NBRC 100139 / OT-3).